Here is a 363-residue protein sequence, read N- to C-terminus: Ribosomal RNA large subunit methyltransferase M (363 aa).

S-adenosyl-L-methionine is bound by residues Ser194, 227–230 (CPGG), Asp246, Asp266, and Asp284. The Proton acceptor role is filled by Lys313.

Belongs to the class I-like SAM-binding methyltransferase superfamily. RNA methyltransferase RlmE family. RlmM subfamily. Monomer.

Its subcellular location is the cytoplasm. The enzyme catalyses cytidine(2498) in 23S rRNA + S-adenosyl-L-methionine = 2'-O-methylcytidine(2498) in 23S rRNA + S-adenosyl-L-homocysteine + H(+). Its function is as follows. Catalyzes the 2'-O-methylation at nucleotide C2498 in 23S rRNA. The protein is Ribosomal RNA large subunit methyltransferase M of Mannheimia succiniciproducens (strain KCTC 0769BP / MBEL55E).